The primary structure comprises 317 residues: 2-oxoglutarate and iron-dependent oxygenase domain-containing protein 3 (317 aa).

The segment at 1 to 34 (MATRHRRRGGSAPSWAKPGKPGERPGGPKKSRGR) is disordered. Residues 1–39 (MATRHRRRGGSAPSWAKPGKPGERPGGPKKSRGRTSWKS) are Cytoplasmic-facing. The helical; Signal-anchor for type II membrane protein transmembrane segment at 40–60 (LLIWGVFGVTLGLMAGYYLWG) threads the bilayer. Over 61–317 (ELITDDSVTE…EHAIGDPTWT (257 aa)) the chain is Lumenal. N-linked (GlcNAc...) asparagine glycosylation is found at asparagine 195 and asparagine 213. One can recognise a Fe2OG dioxygenase domain in the interval 205 to 307 (KPTFFSRMNS…AITISFTCNP (103 aa)). Residues histidine 228 and aspartate 230 each coordinate Fe cation. A glycan (N-linked (GlcNAc...) asparagine) is linked at asparagine 265. Residue histidine 286 participates in Fe cation binding. Arginine 296 is an active-site residue. Residue arginine 296 participates in 2-oxoglutarate binding.

Belongs to the OGFOD3 family. It depends on Fe(2+) as a cofactor. Requires L-ascorbate as cofactor.

The protein localises to the membrane. In Xenopus tropicalis (Western clawed frog), this protein is 2-oxoglutarate and iron-dependent oxygenase domain-containing protein 3 (ogfod3).